The primary structure comprises 303 residues: Acetylglutamate kinase (303 aa).

Substrate-binding positions include 67-68 (GG), Arg-89, and Asn-193.

This sequence belongs to the acetylglutamate kinase family. ArgB subfamily.

Its subcellular location is the cytoplasm. It catalyses the reaction N-acetyl-L-glutamate + ATP = N-acetyl-L-glutamyl 5-phosphate + ADP. Its pathway is amino-acid biosynthesis; L-arginine biosynthesis; N(2)-acetyl-L-ornithine from L-glutamate: step 2/4. Its function is as follows. Catalyzes the ATP-dependent phosphorylation of N-acetyl-L-glutamate. The polypeptide is Acetylglutamate kinase (Acinetobacter baylyi (strain ATCC 33305 / BD413 / ADP1)).